Reading from the N-terminus, the 603-residue chain is Deuterosome assembly protein 1 (603 aa).

5 coiled-coil regions span residues 14–59 (CEAE…NAQT), 85–197 (MTQN…GKKQ), 227–278 (IEKL…ELQS), 336–399 (QDQP…KQLK), and 454–480 (HTSI…NGKS). Ser-546 carries the phosphoserine modification. The stretch at 557 to 600 (AAQHFLLEEEKRAKELEKLLNTHIDELQRHTEFTLNKYSKLKQN) forms a coiled coil.

It belongs to the CEP63 family. As to quaternary structure, interacts with CEP152; the interaction is mutually exclusive with CEP63.

It localises to the cytoplasm. Its function is as follows. Key structural component of the deuterosome, a structure that promotes de novo centriole amplification in multiciliated cells. Deuterosome-mediated centriole amplification occurs in terminally differentiated multiciliated cells and can generate more than 100 centrioles. Probably sufficient for the specification and formation of the deuterosome inner core. Interacts with CEP152 and recruits PLK4 to activate centriole biogenesis. The sequence is that of Deuterosome assembly protein 1 from Macaca fascicularis (Crab-eating macaque).